Reading from the N-terminus, the 708-residue chain is Alpha-galactosidase (708 aa).

The Nucleophile role is filled by D441. D505 (proton donor) is an active-site residue.

It belongs to the glycosyl hydrolase 36 family. Homotetramer.

The catalysed reaction is Hydrolysis of terminal, non-reducing alpha-D-galactose residues in alpha-D-galactosides, including galactose oligosaccharides, galactomannans and galactolipids.. This chain is Alpha-galactosidase (rafA), found in Escherichia coli.